We begin with the raw amino-acid sequence, 289 residues long: Probable WRKY transcription factor 38 (289 aa).

The disordered stretch occupies residues 62-103; sequence PETEDDQFSDLSSRDSSPPPQGSPSKKRKIDSTNSSENWRDD. Positions 104-172 form a DNA-binding region, WRKY; that stretch reads SPDPIYYDGY…YFGHHTCKTE (69 aa). Positions 249-266 are enriched in low complexity; it reads LSSPSGSYPPSSSSGSES. Residues 249-278 are disordered; that stretch reads LSSPSGSYPPSSSSGSESADFNSDLLFDNP.

Belongs to the WRKY group III family.

It is found in the nucleus. Transcription factor. Interacts specifically with the W box (5'-(T)TGAC[CT]-3'), a frequently occurring elicitor-responsive cis-acting element. The chain is Probable WRKY transcription factor 38 (WRKY38) from Arabidopsis thaliana (Mouse-ear cress).